We begin with the raw amino-acid sequence, 555 residues long: MEFTEQLFMITGCPERHNDKPIGRGFNIISMKSFKKGKGFILFEAKHIPKNYYGYYLRPVILPTNNREFAFQKSPWGYYTNMVSLDEIYELANPQTFYMLEKYGLDLGEMSAESRALNYSKYYADDYTNSFAHKYFLSRKNMYEDGHCQDIDCEPNQSEDTDCESNRSENSEDIGYVIDFNNIYKLKNVTHTPYLGMNLPDRLFIITVYRGVFGTKLISQGLNCFSKQEFNRQKGFIVLNAKNIIKDCYGYFIHSVILPTSHPEFILEDRHTYYYTNMVIIDKTYELSDPETFRILGKYGLDLTVYSAEQRAKNYETSRPMNVLKSTSNHHMPSCDFSHVDSTYNRTSTTSVWTTKNIPLTIDTKVNNIHQFIQKDEFKSAQKLLEDDIVFKKVVDTAIKSNNQKTIKYLIDQQQFDINEAIKLALEENKLDIFNMLRLFNFDKVRCLATASILGYLEIVDKMMENDFEKINGDLVNIVLRNAAEGGKIDIVWYISEKFIEFVTKIDIEVAETIVKQRIQHICTFSDDNDIDISVEQDMLELFENMKMIVVNSKF.

4 ANK repeats span residues T364–I389, V390–E420, I422–C447, and G455–K488.

The chain is Putative ankyrin repeat protein L283 from Acanthamoeba polyphaga mimivirus (APMV).